The chain runs to 171 residues: S-ribosylhomocysteine lyase (171 aa).

Fe cation is bound by residues His54, His58, and Cys128.

The protein belongs to the LuxS family. In terms of assembly, homodimer. Fe cation is required as a cofactor.

The catalysed reaction is S-(5-deoxy-D-ribos-5-yl)-L-homocysteine = (S)-4,5-dihydroxypentane-2,3-dione + L-homocysteine. Functionally, involved in the synthesis of autoinducer 2 (AI-2) which is secreted by bacteria and is used to communicate both the cell density and the metabolic potential of the environment. The regulation of gene expression in response to changes in cell density is called quorum sensing. Catalyzes the transformation of S-ribosylhomocysteine (RHC) to homocysteine (HC) and 4,5-dihydroxy-2,3-pentadione (DPD). This is S-ribosylhomocysteine lyase from Edwardsiella ictaluri (strain 93-146).